Reading from the N-terminus, the 334-residue chain is Catabolite repressor/activator (334 aa).

The region spanning 1 to 58 (MKLDEIARLAGVSRTTASYVINGKAKQYRVSDKTVEKVMAVVREHNYHPNAVAAGLRA) is the HTH lacI-type domain. The H-T-H motif DNA-binding region spans 3–22 (LDEIARLAGVSRTTASYVIN).

As to quaternary structure, homotetramer.

Global transcriptional regulator, which plays an important role in the regulation of carbon metabolism. This Salmonella typhimurium (strain LT2 / SGSC1412 / ATCC 700720) protein is Catabolite repressor/activator (cra).